A 596-amino-acid chain; its full sequence is Deuterosome assembly protein 1 (596 aa).

3 coiled-coil regions span residues 8–68 (IARN…NHEI), 130–180 (CELQ…FQKE), and 227–284 (IENL…DLLR). A compositionally biased stretch (polar residues) spans 297 to 306 (TANLANQKTA). Residues 297-316 (TANLANQKTAQGEEASFQVT) form a disordered region. Positions 337–402 (SEKYQAENDL…LKGAQNRQTS (66 aa)) form a coiled coil. A disordered region spans residues 447 to 467 (DKPQKHRSFHGENNSLKPTNY). A compositionally biased stretch (polar residues) spans 457-467 (GENNSLKPTNY).

It belongs to the CEP63 family.

The protein localises to the cytoplasm. Functionally, key structural component of the deuterosome, a structure that promotes de novo centriole amplification in multiciliated cells. Deuterosome-mediated centriole amplification occurs in terminally differentiated multiciliated cells and can generate more than 100 centrioles. Probably sufficient for the specification and formation of the deuterosome inner core. This chain is Deuterosome assembly protein 1, found in Xenopus tropicalis (Western clawed frog).